The chain runs to 837 residues: Histone acetyltransferase KAT2A (837 aa).

The tract at residues 1–99 (MAEPSQAPTP…RKAQVRGLPR (99 aa)) is disordered. Ala-2 is modified (N-acetylalanine). Pro residues predominate over residues 7-51 (APTPAPAAQPRPLQSPAPAPTPTPAPSPASAPIPTPTPAPAPAPA). Residues 58 to 74 (TGTGGPGVGSGGAGSGG) show a composition bias toward gly residues. Residues 75-87 (DPARPGLSQQQRA) are compositionally biased toward low complexity. A compositionally biased stretch (basic residues) spans 88–99 (SQRKAQVRGLPR). Ser-307 is modified (phosphoserine). The disordered stretch occupies residues 407 to 434 (FSPSMGGGSNSSLSLDSAGAEPMPGEKR). Residues 416-425 (NSSLSLDSAG) are compositionally biased toward low complexity. The N-acetyltransferase domain maps to 503 to 656 (VIGNSLTPKA…GATLMECELN (154 aa)). At Lys-549 the chain carries N6-acetyllysine. Glu-575 (proton donor/acceptor) is an active-site residue. Residues 579 to 581 (CAV), 586 to 592 (QVKGYGT), and Tyr-617 contribute to the acetyl-CoA site. Succinyl-CoA is bound by residues 579–581 (CAV), 586–592 (QVKGYGT), and Tyr-617. Residues 639 to 648 (LGYIKDYEGA) form a loop 3 region. A Glycyl lysine isopeptide (Lys-Gly) (interchain with G-Cter in SUMO2) cross-link involves residue Lys-728. Positions 728 to 832 (KDPDQLYTTL…KFFYFKLKEG (105 aa)) constitute a Bromo domain. Thr-735 carries the phosphothreonine modification. Residues Lys-759 and Lys-791 each participate in a glycyl lysine isopeptide (Lys-Gly) (interchain with G-Cter in SUMO2) cross-link.

This sequence belongs to the acetyltransferase family. GCN5 subfamily. In terms of assembly, homooligomer; may form a tetramer of homodimers. Interacts with EP300, CREBBP and ADA2. Component of the TFTC-HAT complex, at least composed of TAF5L, TAF6L, TAF3, TADA3L, SUPT3H/SPT3, TAF2/TAFII150, TAF4/TAFII135, TAF5/TAFII100, KAT2A/GCN5L2, TAF10 and TRRAP. Component of the STAGA transcription coactivator-HAT complex, at least composed of SUPT3H, KAT2A, SUPT7L, TAF5L, TAF6L, TADA3L, TAD1L, TAF10, TAF12, TRRAP and TAF9. The STAGA core complex is associated with a subcomplex required for histone deubiquitination composed of ATXN7L3, ENY2 and USP22. Component of the ADA2A-containing complex (ATAC), composed of KAT14, KAT2A, TADA2L, TADA3L, ZZ3, MBIP, WDR5, YEATS2, CCDC101 and DR1. In the complex, it probably interacts directly with KAT14, MBIP and WDR5. Interacts with PML. Interacts with CEBPB. Interacts with TACC1, TACC2 and TACC3. Interacts with RELA. Interacts with NFATC2. Interacts with TBX5. Interacts with PLK4. Associates with the 2-oxoglutarate dehydrogenase complex. Interacts with XPC; leading to KAT2A recruitment to promoters and subsequent acetylation of histones. Interacts with ERCC3/XPB; leading to KAT2A recruitment to promoters and subsequent acetylation of histones. Interacts with ISL1. Interactions of ISL1 with MLIP1 or KAT2A may be mutually exclusive. (Microbial infection) Interacts with and acetylates HIV-1 Tat. In terms of processing, acetylated at Lys-549, inhibiting the protein acetyltransferase activity. Deacetylation at Lys-549 by SIRT6 promotes phosphorylation at Ser-307 and Thr-735 and subsequent activation of the protein acetyltransferase activity, leading to acetylation and inactivation of PPARGC1A. In terms of tissue distribution, expressed in all tissues tested.

It is found in the nucleus. It localises to the chromosome. The protein resides in the cytoplasm. The protein localises to the cytoskeleton. Its subcellular location is the microtubule organizing center. It is found in the centrosome. The catalysed reaction is L-lysyl-[histone] + acetyl-CoA = N(6)-acetyl-L-lysyl-[histone] + CoA + H(+). It catalyses the reaction L-lysyl-[protein] + acetyl-CoA = N(6)-acetyl-L-lysyl-[protein] + CoA + H(+). The enzyme catalyses succinyl-CoA + L-lysyl-[protein] = N(6)-succinyl-L-lysyl-[protein] + CoA + H(+). It carries out the reaction glutaryl-CoA + L-lysyl-[protein] = N(6)-glutaryl-L-lysyl-[protein] + CoA + H(+). In terms of biological role, protein lysine acyltransferase that can act as a acetyltransferase, glutaryltransferase, succinyltransferase or malonyltransferase, depending on the context. Acts as a histone lysine succinyltransferase: catalyzes succinylation of histone H3 on 'Lys-79' (H3K79succ), with a maximum frequency around the transcription start sites of genes. Succinylation of histones gives a specific tag for epigenetic transcription activation. Association with the 2-oxoglutarate dehydrogenase complex, which provides succinyl-CoA, is required for histone succinylation. In different complexes, functions either as an acetyltransferase (HAT) or as a succinyltransferase: in the SAGA and ATAC complexes, acts as a histone acetyltransferase. Has significant histone acetyltransferase activity with core histones, but not with nucleosome core particles. Has a a strong preference for acetylation of H3 at 'Lys-9' (H3K9ac). Acetylation of histones gives a specific tag for epigenetic transcription activation. Recruited by the XPC complex at promoters, where it specifically mediates acetylation of histone variant H2A.Z.1/H2A.Z, thereby promoting expression of target genes. Involved in long-term memory consolidation and synaptic plasticity: acts by promoting expression of a hippocampal gene expression network linked to neuroactive receptor signaling. Acts as a positive regulator of T-cell activation: upon TCR stimulation, recruited to the IL2 promoter following interaction with NFATC2 and catalyzes acetylation of histone H3 at 'Lys-9' (H3K9ac), leading to promote IL2 expression. Required for growth and differentiation of craniofacial cartilage and bone by regulating acetylation of histone H3 at 'Lys-9' (H3K9ac). Regulates embryonic stem cell (ESC) pluripotency and differentiation. Also acetylates non-histone proteins, such as CEBPB, MRE11, PPARGC1A, PLK4 and TBX5. Involved in heart and limb development by mediating acetylation of TBX5, acetylation regulating nucleocytoplasmic shuttling of TBX5. Acts as a negative regulator of centrosome amplification by mediating acetylation of PLK4. Acts as a negative regulator of gluconeogenesis by mediating acetylation and subsequent inactivation of PPARGC1A. Also acts as a histone glutaryltransferase: catalyzes glutarylation of histone H4 on 'Lys-91' (H4K91glu), a mark that destabilizes nucleosomes by promoting dissociation of the H2A-H2B dimers from nucleosomes. (Microbial infection) In case of HIV-1 infection, it is recruited by the viral protein Tat. Regulates Tat's transactivating activity and may help inducing chromatin remodeling of proviral genes. The sequence is that of Histone acetyltransferase KAT2A from Homo sapiens (Human).